A 510-amino-acid polypeptide reads, in one-letter code: MSHIPISNTIPPKQTDGNGKANISPDKLDPKVSIDMEAPEFKDFAKTMVDFIAEYLENIRDRRVLPEVKPGYLKPLIPDAAPEKPEKWQDVMQDIERVIMPGVTHWHSPKFHAYFPTANSYPAIVADMLSGAIACIGFTWIASPACTELEVVMMDWLGKMLELPAEFLVCSGGKGGGVIQGTASESTLVALLGAKAKKLKEVKELHPEWDEHTILGKLVGYCSDQAHSSVERAGLLGGVKLRSVQSENHRMRGAALEKAIEQDLAEGLIPFYAVVTLGTTNSCAFDYLDECGPVGNKHNLWIHVDAAYAGSAFICPEYRHLMKGIESADSFNFNPHKWMLVNFDCSAMWLKDPSWVVNAFNVDPLYLKHDMQGSAPDYRHWQIPLGRRFRALKLWFVLRLYGVENLQAHIRRHCNFAKQFGDLCVADSRFELAAEINMGLVCFRLKGSNERNEALLKRINGRGHIHLVPAKIKDVYFLRMAICSRFTQSEDMEYSWKEVSAAADEMEQEQ.

Positions 1 to 17 are enriched in polar residues; that stretch reads MSHIPISNTIPPKQTDG. The disordered stretch occupies residues 1-29; sequence MSHIPISNTIPPKQTDGNGKANISPDKLD. Residue threonine 117 coordinates substrate. Pyridoxal 5'-phosphate is bound by residues alanine 183, serine 184, histidine 227, aspartate 305, and asparagine 334. Position 227 (histidine 227) interacts with substrate. Lysine 337 bears the N6-(pyridoxal phosphate)lysine mark. The segment at 358–384 is disordered; it reads NAFNVDPLYLKHDMQGSAPDYRHWQIP.

This sequence belongs to the group II decarboxylase family. Homodimer. Pyridoxal 5'-phosphate is required as a cofactor.

The catalysed reaction is L-dopa + H(+) = dopamine + CO2. It carries out the reaction 5-hydroxy-L-tryptophan + H(+) = serotonin + CO2. Its function is as follows. Catalyzes the decarboxylation of L-3,4-dihydroxyphenylalanine (L-DOPA) to dopamine and L-5-hydroxytryptophan (5-HTP) to serotonin. Catalyzes the formation of serotonin more efficiently than dopamine. Displays no activity to tyrosine. Variation in the synthesis of bioamines may be a factor contributing to natural variation in life span. The polypeptide is Aromatic-L-amino-acid decarboxylase (Ddc) (Drosophila simulans (Fruit fly)).